Here is a 165-residue protein sequence, read N- to C-terminus: Group 10 secretory phospholipase A2 (165 aa).

The signal sequence occupies residues 1–31; it reads MGPLPVCLPIMLLLLLPSLLLLLLLPGPGSG. Residues 32–42 constitute a propeptide that is removed on maturation; sequence EASRILRVHRR. Intrachain disulfides connect cysteine 53–cysteine 111, cysteine 67–cysteine 157, cysteine 69–cysteine 85, cysteine 84–cysteine 139, cysteine 90–cysteine 164, cysteine 91–cysteine 132, cysteine 100–cysteine 125, and cysteine 118–cysteine 130. Ca(2+)-binding residues include phenylalanine 68, glycine 70, and glycine 72. Histidine 88 is a catalytic residue. A Ca(2+)-binding site is contributed by aspartate 89. Residue asparagine 113 is glycosylated (N-linked (GlcNAc...) asparagine). Residue aspartate 133 is part of the active site.

The protein belongs to the phospholipase A2 family. Interacts with PLA2R1; this interaction mediates PLA2G10 clearance and inactivation. Requires Ca(2+) as cofactor. Found in spleen, thymus, peripheral blood leukocytes, pancreas, lung, and colon. Expressed in neuronal fibers in dorsal root ganglia and in peripheral tissues including stomach, white adipose tissue and prostate (at protein level).

Its subcellular location is the secreted. It localises to the lysosome. It is found in the cytoplasmic vesicle. The protein localises to the secretory vesicle. The protein resides in the acrosome. It carries out the reaction a 1,2-diacyl-sn-glycero-3-phosphocholine + H2O = a 1-acyl-sn-glycero-3-phosphocholine + a fatty acid + H(+). The enzyme catalyses 1-hexadecanoyl-2-(9Z-octadecenoyl)-sn-glycero-3-phosphocholine + H2O = 1-hexadecanoyl-sn-glycero-3-phosphocholine + (9Z)-octadecenoate + H(+). The catalysed reaction is 1-octadecanoyl-2-(5Z,8Z,11Z,14Z-eicosatetraenoyl)-sn-glycero-3-phosphocholine + H2O = 1-octadecanoyl-sn-glycero-3-phosphocholine + (5Z,8Z,11Z,14Z)-eicosatetraenoate + H(+). It catalyses the reaction 1,2-dihexadecanoyl-sn-glycero-3-phosphocholine + H2O = 1-hexadecanoyl-sn-glycero-3-phosphocholine + hexadecanoate + H(+). It carries out the reaction 1-hexadecanoyl-2-(9Z-octadecenoyl)-sn-glycero-3-phosphoglycerol + H2O = 1-hexadecanoyl-sn-glycero-3-phosphoglycerol + (9Z)-octadecenoate + H(+). The enzyme catalyses 1,2-dihexadecanoyl-sn-glycero-3-phospho-(1'-sn-glycerol) + H2O = 1-hexadecanoyl-sn-glycero-3-phospho-(1'-sn-glycerol) + hexadecanoate + H(+). The catalysed reaction is 1-hexadecanoyl-2-(9Z-octadecenoyl)-sn-glycero-3-phospho-L-serine + H2O = 1-hexadecanoyl-sn-glycero-3-phospho-L-serine + (9Z)-octadecenoate + H(+). It catalyses the reaction 1-hexadecanoyl-2-(9Z,12Z-octadecadienoyl)-sn-glycero-3-phosphoethanolamine + H2O = 1-hexadecanoyl-sn-glycero-3-phosphoethanolamine + (9Z,12Z)-octadecadienoate + H(+). It carries out the reaction 1-hexadecanoyl-2-(9Z-octadecenoyl)-sn-glycero-3-phosphate + H2O = 1-hexadecanoyl-sn-glycero-3-phosphate + (9Z)-octadecenoate + H(+). The enzyme catalyses 1-O-hexadecyl-2-acetyl-sn-glycero-3-phosphocholine + H2O = 1-O-hexadecyl-sn-glycero-3-phosphocholine + acetate + H(+). Inhibited by methyl indoxam. Secretory calcium-dependent phospholipase A2 that primarily targets extracellular phospholipids. Hydrolyzes the ester bond of the fatty acyl group attached at sn-2 position of phospholipids with preference for phosphatidylcholines and phosphatidylglycerols over phosphatidylethanolamines. Preferentially releases sn-2 omega-6 and omega-3 polyunsaturated fatty acyl (PUFA) chains over saturated fatty acyls. Contributes to phospholipid remodeling of very low-density lipoprotein (VLDL), low-density lipoprotein (LDL) and high-density lipoprotein (HDL) particles. Hydrolyzes LDL phospholipids releasing unsaturated fatty acids that regulate macrophage differentiation toward foam cells. Efficiently hydrolyzes and inactivates platelet activating factor (PAF), a potent lipid mediator present in oxidized LDL. May act in an autocrine and paracrine manner. Secreted by lung epithelium, targets membrane phospholipids of infiltrating eosinophils, releasing arachidonate and boosting eicosanoid and cysteinyl leukotriene synthesis involved in airway inflammatory response. Secreted by gut epithelium, hydrolyzes dietary and biliary phosphatidylcholines in the gastrointestinal lumen. Plays a stem cell regulator role in colon epithelium. Within intracellular compartment, mediates Paneth-like cell differentiation and its stem cell supporting functions by inhibiting the Wnt signaling pathway in intestinal stem cell (ISC). Secreted in the intestinal lumen upon inflammation, acts in an autocrine way and promotes prostaglandin E2 synthesis that stimulates Wnt signaling pathway in ISCs and tissue regeneration. May participate in hair follicle morphogenesis by regulating phosphatidylethanolamines metabolism at the outermost epithelial layer and facilitating melanin synthesis. By releasing lysophosphatidylcholines (LPCs) at sperm acrosome, controls sperm cell capacitation, acrosome reaction and overall fertility. May promote neurite outgrowth in neuron fibers involved in nociception. Contributes to lipid remodeling of cellular membranes and generation of lipid mediators involved in pathogen clearance. Cleaves sn-2 fatty acyl chains of phosphatidylglycerols and phosphatidylethanolamines, which are major components of membrane phospholipids in bacteria. Displays bactericidal activity against Gram-positive bacteria by directly hydrolyzing phospholipids of the bacterial membrane. In pulmonary epithelium, may contribute to host defense response against adenoviral infection. Prevents adenovirus entry into host cells by hydrolyzing host cell plasma membrane, releasing C16:0 LPCs that inhibit virus-mediated membrane fusion and viral infection. Likely prevents adenoviral entry into the endosomes of host cells. May play a role in maturation and activation of innate immune cells including macrophages, group 2 innate lymphoid cells and mast cells. This is Group 10 secretory phospholipase A2 (PLA2G10) from Homo sapiens (Human).